A 346-amino-acid polypeptide reads, in one-letter code: L-malyl-CoA/beta-methylmalyl-CoA lyase (346 aa).

Mg(2+) contacts are provided by Glu-148 and Asp-177. Substrate contacts are provided by residues 176-177 and 253-254; these read VD and LH.

The protein belongs to the HpcH/HpaI aldolase family. It depends on Mg(2+) as a cofactor. Mn(2+) is required as a cofactor.

It catalyses the reaction (S)-malyl-CoA = glyoxylate + acetyl-CoA. It carries out the reaction (2R,3S)-beta-methylmalyl-CoA = propanoyl-CoA + glyoxylate. Functionally, involved in the methylaspartate cycle. Catalyzes the reversible cleavage of beta-methylmalyl-CoA to propionyl-CoA and glyoxylate, as well as the reversible cleavage of (S)-malyl-CoA to acetyl-CoA and glyoxylate. In addition, it has a small malyl-CoA thioesterase activity. It can also catalyze the cleavage of (S)-citramalyl-CoA to acetyl-CoA and pyruvate. This is L-malyl-CoA/beta-methylmalyl-CoA lyase (citE1) from Haloarcula marismortui (strain ATCC 43049 / DSM 3752 / JCM 8966 / VKM B-1809) (Halobacterium marismortui).